We begin with the raw amino-acid sequence, 1121 residues long: Phosphatidylinositol 4-kinase beta 1 (1121 aa).

Residues Met1 to Ala143 form the PIK helical domain. Residues Pro187–Gly207 are compositionally biased toward polar residues. The segment at Pro187–Leu210 is disordered. Tandem repeats lie at residues Ala212–Leu231, Ser244–Glu263, Pro266–Asp285, Asn288–Glu306, Ser309–Glu328, Ala331–Glu350, Pro353–Lys372, Glu380–Arg398, and Asp420–Lys438. The segment at Ala212–Asp508 is 11 X 20 AA approximate repeats (PPC). Disordered stretches follow at residues Glu343 to Glu421, Asp435 to Pro489, Val506 to Ser544, and Ala794 to Met825. 4 stretches are compositionally biased toward basic and acidic residues: residues Phe358–Glu376, Asp383–Glu405, Ala412–Glu421, and Asp435–Asp445. Over residues Gly446–Pro455 the composition is skewed to acidic residues. Phosphoserine occurs at positions 449 and 454. 2 consecutive repeat copies span residues Ser454 to Lys472 and Pro489 to Asp508. A compositionally biased stretch (basic and acidic residues) spans Ile466–Ser475. Over residues Glu476–Pro489 the composition is skewed to polar residues. Residues Glu835 to Arg1106 form the PI3K/PI4K catalytic domain. The segment at Arg841–Ala847 is G-loop. The catalytic loop stretch occupies residues Gln969–Asn977. An activation loop region spans residues His988–Thr1012.

This sequence belongs to the PI3/PI4-kinase family. Type III PI4K subfamily. In terms of assembly, interacts with AHK2, CBL1 and RABA4D. As to expression, expressed constitutively in leaves, roots, flowers, and stems.

It localises to the cell membrane. Its subcellular location is the golgi apparatus. The protein localises to the trans-Golgi network. The protein resides in the cytoplasmic vesicle membrane. It carries out the reaction a 1,2-diacyl-sn-glycero-3-phospho-(1D-myo-inositol) + ATP = a 1,2-diacyl-sn-glycero-3-phospho-(1D-myo-inositol 4-phosphate) + ADP + H(+). Its activity is regulated as follows. Stimulated by phosphatidylinositol 4-phosphate (PtdIns4P). Slightly repressed by phosphatidyl-choline (PtdCho), wortmannin and adenosine. Acts on phosphatidylinositol (PtdIns) in the first committed step in the production of the second messenger inositol-1,4,5-trisphosphate. Necessary for proper organization of the trans-Golgi network (TGN) and post-Golgi secretion in root hairs. Together with PI4KB2, required during polarized root hair expansion and pollen tube elongation. Functions redundantly with PI4KB2 upstream of the cold response phosphoinositide-dependent phospholipase C (PI-PLC) pathway. The polypeptide is Phosphatidylinositol 4-kinase beta 1 (Arabidopsis thaliana (Mouse-ear cress)).